A 169-amino-acid polypeptide reads, in one-letter code: Crossover junction endodeoxyribonuclease RuvC (169 aa).

Active-site residues include Asp-7, Glu-67, and Asp-139. Mg(2+) contacts are provided by Asp-7, Glu-67, and Asp-139.

This sequence belongs to the RuvC family. In terms of assembly, homodimer which binds Holliday junction (HJ) DNA. The HJ becomes 2-fold symmetrical on binding to RuvC with unstacked arms; it has a different conformation from HJ DNA in complex with RuvA. In the full resolvosome a probable DNA-RuvA(4)-RuvB(12)-RuvC(2) complex forms which resolves the HJ. It depends on Mg(2+) as a cofactor.

It localises to the cytoplasm. It catalyses the reaction Endonucleolytic cleavage at a junction such as a reciprocal single-stranded crossover between two homologous DNA duplexes (Holliday junction).. Functionally, the RuvA-RuvB-RuvC complex processes Holliday junction (HJ) DNA during genetic recombination and DNA repair. Endonuclease that resolves HJ intermediates. Cleaves cruciform DNA by making single-stranded nicks across the HJ at symmetrical positions within the homologous arms, yielding a 5'-phosphate and a 3'-hydroxyl group; requires a central core of homology in the junction. The consensus cleavage sequence is 5'-(A/T)TT(C/G)-3'. Cleavage occurs on the 3'-side of the TT dinucleotide at the point of strand exchange. HJ branch migration catalyzed by RuvA-RuvB allows RuvC to scan DNA until it finds its consensus sequence, where it cleaves and resolves the cruciform DNA. The polypeptide is Crossover junction endodeoxyribonuclease RuvC (Rhodospirillum rubrum (strain ATCC 11170 / ATH 1.1.1 / DSM 467 / LMG 4362 / NCIMB 8255 / S1)).